A 493-amino-acid polypeptide reads, in one-letter code: Trigger factor (493 aa).

A PPIase FKBP-type domain is found at 169 to 254; sequence GDRVTMDYLG…VKEVAAPAET (86 aa). Residues 439-493 are disordered; the sequence is ELLAEDEDGDDTKPAKKSAKKKAAKAEDASAEGEEAAPKKKAAAKKKAADEGDAE.

Belongs to the FKBP-type PPIase family. Tig subfamily.

Its subcellular location is the cytoplasm. The enzyme catalyses [protein]-peptidylproline (omega=180) = [protein]-peptidylproline (omega=0). In terms of biological role, involved in protein export. Acts as a chaperone by maintaining the newly synthesized protein in an open conformation. Functions as a peptidyl-prolyl cis-trans isomerase. This is Trigger factor from Allorhizobium ampelinum (strain ATCC BAA-846 / DSM 112012 / S4) (Agrobacterium vitis (strain S4)).